A 325-amino-acid chain; its full sequence is 6-hydroxymellein 5-farnesyltransferase cdmH (325 aa).

The next 5 helical transmembrane spans lie at 60 to 80, 113 to 133, 138 to 158, 169 to 189, and 192 to 212; these read ASILRLAGLCTAHCVLLGAAG, AFTWMAFLYSTSVGMLKAMLG, WPFMVPLTAIILVYPLGKRPI, LLGIAVGYPTMYGWAAVYGPC, and ISEILHRCVPLWIFLFFWSFY. Residue N214 is glycosylated (N-linked (GlcNAc...) asparagine). Helical transmembrane passes span 243 to 263, 267 to 287, and 295 to 315; these read ALLAILASIALSTIPFVLRPF, WLWLSWVGAWVPGIIQQLLSF, and GGVLHLSTVKLGLWTVFACTL.

Belongs to the UbiA prenyltransferase family. Mg(2+) is required as a cofactor.

The protein localises to the membrane. It catalyses the reaction 6-hydroxymellein + (2E,6E)-farnesyl diphosphate = verruculide C + diphosphate. It functions in the pathway secondary metabolite biosynthesis; terpenoid biosynthesis. In terms of biological role, 6-hydroxymellein 5-farnesyltransferase; part of the gene cluster that mediates the biosynthesis of chrodrimanin B, a meroterpenoid that acts as a potent blocker of insect GABA-gated chloride channels. The first step of the pathway is the biosynthesis of 6-hydroxymellein by the polyketide synthase cdmE. The prenyltransferase cdmH acts as a 6-hydroxymellein 5-farnesyltransferase and produces the hydrophobic metabolite verruculide C. The FAD-dependent monooxygenase cdmI further converts verruculide C into verruculide B. The terpene cyclase cdmG then produced the pentacyclic molecule 3-hydroxypentacecilide A, the backbone structure of chrodrimanin B, via folding the farnesyl moiety of the substrate into the chair-boat conformation. The short-chain dehydrogenase/reductase cdmF functions as the 3-OH dehydrogenase that oxidizes the C-3 hydroxyl group of 3-hydroxypentacecilide A and produces chrodrimanin C, the dehydrogenated product of 3-hydroxypentacecilide A. The cytochrome P450 monooxygenase cdmJ then accepts both 3-hydroxypentacecilide A and chrodrimanin C and functions as a C-7-beta-hydroxylase to produce respectively chrodrimanin H and chrodrimanin F. The dioxygenase cdmA accepts chrodrimanin H to afford chrodrimanin E, which is further transformed to chrodrimanin A by the dioxygenase cdmD. CdmA can also accept chrodrimanin C as substrate to convert it into verruculide A, which is further converted into chrodrimanin T by cdmD. The last step of the biosynthesis is proposed to be performed by the acetyltransferase cdmC which acetylates chrodrimanin A to yield chrodrimanin B. The pathway may also lead to the production of additional shunt products, including chrodrimanins T and U. The protein is 6-hydroxymellein 5-farnesyltransferase cdmH of Talaromyces verruculosus (Penicillium verruculosum).